The primary structure comprises 437 residues: Inactive peptidyl-prolyl cis-trans isomerase shutdown (437 aa).

The region spanning 92 to 178 (DSEVTIHYAA…RPEPALFVIV (87 aa)) is the PPIase FKBP-type domain. 3 TPR repeats span residues 209–242 (VNAL…LRLS), 258–294 (VNAY…EKHC), and 295–327 (KALY…EPKN).

This sequence belongs to the FKBP6 family. Interacts with Hsp83.

The protein resides in the cytoplasm. Its function is as follows. Co-chaperone required during oogenesis to repress transposable elements and prevent their mobilization, which is essential for the germline integrity. Acts via the piRNA metabolic process, which mediates the repression of transposable elements during meiosis by forming complexes composed of piRNAs and Piwi proteins and govern the methylation and subsequent repression of transposons. Acts as a co-chaperone via its interaction with Hsp83/HSP90 and is required for the biogenesis of all three piRNA major populations. The polypeptide is Inactive peptidyl-prolyl cis-trans isomerase shutdown (shu) (Bombyx mori (Silk moth)).